A 584-amino-acid polypeptide reads, in one-letter code: 65 kDa membrane protein (584 aa).

The N-terminal stretch at 1-30 (MKFKSLITTTLALGVLASTGANFNNNEASA) is a signal peptide. 5 MAP repeats span residues 45–154 (GYSK…EDKK), 156–265 (DKAN…ENKA), 266–374 (KRNY…KADR), 375–474 (YVPY…TGTK), and 475–584 (AKAD…KKNK).

The protein resides in the cell membrane. Binds various plasma and ECM-proteins. This chain is 65 kDa membrane protein, found in Staphylococcus aureus (strain Newman).